A 1325-amino-acid chain; its full sequence is Bile salt export pump (1325 aa).

The Cytoplasmic segment spans residues 1 to 62 (MSDAVILRSV…FSSTTDIWLM (62 aa)). Positions 62 to 385 (MFVGSLCAFL…ASSCLEAFAT (324 aa)) constitute an ABC transmembrane type-1 1 domain. Residues 63–83 (FVGSLCAFLHGLSHPGVLLIF) traverse the membrane as a helical segment. Topologically, residues 84 to 147 (GTMTDVFIAY…MIKFASYYAG (64 aa)) are extracellular. 4 N-linked (GlcNAc...) asparagine glycosylation sites follow: asparagine 109, asparagine 116, asparagine 122, and asparagine 125. Residues 148-168 (IALLVLITGYIQICFWVIAAA) traverse the membrane as a helical segment. Topologically, residues 169–240 (RQIQKMRKIS…FLLGFYQGWK (72 aa)) are cytoplasmic. A helical transmembrane segment spans residues 241-261 (LTLVIISVSPLIGIGAAIIGL). Topologically, residues 262 to 319 (SVSKFTDYELKAYAKAGSVADEVISSMRTVAAFGGEKKEVERYEKNLVFAQRWGIRKG) are extracellular. A helical transmembrane segment spans residues 320–340 (IVMGFFTGFMWCLIFLCYALA). The Cytoplasmic segment spans residues 341-353 (FWYGSKLVLEDGE). Residues 354-374 (YTAGTLVQIFLSILLGALNLG) traverse the membrane as a helical segment. Asparagine 375, asparagine 424, and asparagine 440 each carry an N-linked (GlcNAc...) asparagine glycan. The Extracellular portion of the chain corresponds to 375–759 (NASSCLEAFA…KFNAPEWPYM (385 aa)). Residues 420 to 656 (IEFHNVTFHY…KGVYFTLVTL (237 aa)) form the ABC transporter 1 domain. Position 455 to 462 (455 to 462 (GSSGSGKS)) interacts with ATP. A glycan (N-linked (GlcNAc...) asparagine) is linked at asparagine 591. One can recognise an ABC transmembrane type-1 2 domain in the interval 759-1047 (MLFGAVGAAV…ASSYTPSYAK (289 aa)). Residues 760–780 (LFGAVGAAVNGSVTPLYAFLF) form a helical membrane-spanning segment. The Cytoplasmic segment spans residues 781 to 798 (SQILGTFSLPDKEEQRSQ). The helical transmembrane segment at 799 to 819 (INGVCLLFVAVGCVSLCTQFL) threads the bilayer. Topologically, residues 820–894 (QGYAFAKSGE…NSFTNVTVAM (75 aa)) are extracellular. A glycan (N-linked (GlcNAc...) asparagine) is linked at asparagine 889. Residues 895 to 915 (IIAFFFSWKLSLVIMCFFPFL) form a helical membrane-spanning segment. The Cytoplasmic portion of the chain corresponds to 916-983 (ALSGALQTRM…PFKTAFRKAN (68 aa)). A helical transmembrane segment spans residues 984–1004 (VYGFCFGFSQCIVFVANSASY). The Extracellular segment spans residues 1005 to 1014 (RYGGYLIPNE). Residues 1015–1035 (GLHFSYVFRVISSVVLSATAL) form a helical membrane-spanning segment. The Cytoplasmic portion of the chain corresponds to 1036–1325 (GRASSYTPSY…KLVTTGAPIS (290 aa)). Residues 1082-1320 (VDFVDCKFTY…KGAYYKLVTT (239 aa)) enclose the ABC transporter 2 domain. 1117-1124 (GSSGCGKS) serves as a coordination point for ATP.

It belongs to the ABC transporter superfamily. ABCB family. Multidrug resistance exporter (TC 3.A.1.201) subfamily. In terms of assembly, interacts with HAX1. Interacts with the adapter protein complex 2 (AP-2) throught AP2A2 or AP2A1; this interaction regulates cell membrane expression of ABCB11 through its internalization in a clathrin-dependent manner and its subsequent degradation. In terms of processing, N-glycosylated. Ubiquitinated; short-chain ubiquitination regulates cell-Surface expression of ABCB11. As to expression, liver.

The protein localises to the apical cell membrane. It localises to the recycling endosome membrane. Its subcellular location is the endosome. The protein resides in the cell membrane. It carries out the reaction cholate(in) + ATP + H2O = cholate(out) + ADP + phosphate + H(+). It catalyses the reaction taurocholate(in) + ATP + H2O = taurocholate(out) + ADP + phosphate + H(+). The catalysed reaction is glycocholate(in) + ATP + H2O = glycocholate(out) + ADP + phosphate + H(+). The enzyme catalyses glycochenodeoxycholate(in) + ATP + H2O = glycochenodeoxycholate(out) + ADP + phosphate + H(+). It carries out the reaction taurochenodeoxycholate(in) + ATP + H2O = taurochenodeoxycholate(out) + ADP + phosphate + H(+). It catalyses the reaction glycoursodeoxycholate(in) + ATP + H2O = glycoursodeoxycholate(out) + ADP + phosphate + H(+). The catalysed reaction is tauroursodeoxycholate(in) + ATP + H2O = tauroursodeoxycholate(out) + ADP + phosphate + H(+). The enzyme catalyses taurodeoxycholate(in) + ATP + H2O = taurodeoxycholate(out) + ADP + phosphate + H(+). It carries out the reaction taurolithocholate 3-sulfate(in) + ATP + H2O = taurolithocholate 3-sulfate(out) + ADP + phosphate + H(+). It catalyses the reaction pravastatin(in) + ATP + H2O = pravastatin(out) + ADP + phosphate + H(+). With respect to regulation, the uptake of taurocholate is inhibited by taurolithocholate sulfate with an IC(50) of 9 uM. Pravastatin competitively inhibits the transport of taurocholic acid. Cyclosporin A, glibenclamide, rifampicin and troglitazonestrongly competitively inhibit the transport activity of taurocholate. The canalicular transport activity of taurocholate is strongly dependent on canalicular membrane cholesterol content. The uptake of taurocholate is increased by short- and medium-chain fatty acids. Cholesterol increases transport capacity of taurocholate without affecting the affinity for the substrate. Functionally, catalyzes the transport of the major hydrophobic bile salts, such as taurine and glycine-conjugated cholic acid across the canalicular membrane of hepatocytes in an ATP-dependent manner, therefore participates in hepatic bile acid homeostasis and consequently to lipid homeostasis through regulation of biliary lipid secretion in a bile salts dependent manner. Transports taurine-conjugated bile salts more rapidly than glycine-conjugated bile salts. Also transports non-bile acid compounds, such as pravastatin and fexofenadine in an ATP-dependent manner and may be involved in their biliary excretion. This chain is Bile salt export pump, found in Canis lupus familiaris (Dog).